Reading from the N-terminus, the 346-residue chain is Biotin synthase (346 aa).

In terms of domain architecture, Radical SAM core spans 38–256; that stretch reads RQVQVSTLLS…IAVARIMMPT (219 aa). 3 residues coordinate [4Fe-4S] cluster: Cys53, Cys57, and Cys60. Positions 97, 128, 188, and 260 each coordinate [2Fe-2S] cluster.

Belongs to the radical SAM superfamily. Biotin synthase family. Homodimer. It depends on [4Fe-4S] cluster as a cofactor. [2Fe-2S] cluster serves as cofactor.

It carries out the reaction (4R,5S)-dethiobiotin + (sulfur carrier)-SH + 2 reduced [2Fe-2S]-[ferredoxin] + 2 S-adenosyl-L-methionine = (sulfur carrier)-H + biotin + 2 5'-deoxyadenosine + 2 L-methionine + 2 oxidized [2Fe-2S]-[ferredoxin]. It participates in cofactor biosynthesis; biotin biosynthesis; biotin from 7,8-diaminononanoate: step 2/2. Catalyzes the conversion of dethiobiotin (DTB) to biotin by the insertion of a sulfur atom into dethiobiotin via a radical-based mechanism. The protein is Biotin synthase of Escherichia coli (strain K12 / DH10B).